A 383-amino-acid chain; its full sequence is GTP-binding protein 10 (383 aa).

Residues 13–148 (GNFIDNLRIY…RIIHLDLKLI (136 aa)) enclose the Obg domain. Positions 149-344 (SDVGLVGFPN…LIGCIRKTMD (196 aa)) constitute an OBG-type G domain. GTP is bound by residues 155-162 (GFPNAGKS), 202-206 (DLPGL), and 278-281 (NKMD). Residues 362–383 (LQKETSRTVKRNLKNSPQRTHH) are disordered. Basic residues predominate over residues 369–383 (TVKRNLKNSPQRTHH).

The protein belongs to the TRAFAC class OBG-HflX-like GTPase superfamily. OBG GTPase family.

The protein localises to the nucleus. It is found in the nucleolus. Functionally, may be involved in the ribosome maturation process. In Xenopus tropicalis (Western clawed frog), this protein is GTP-binding protein 10 (gtpbp10).